We begin with the raw amino-acid sequence, 205 residues long: MPELVVRHLGLVEYQPTLESMRQLTRERDERTADEIWLLQHPKVFTQGQAGKAEHLLAPGDIPVVQVERGGQVTYHGPGQLVAYLMLDLRRLDLGVRELVTAMEQSLVDLLASYGIEAAPKADAPGVYVAGDKIASLGLRVSRGCSFHGLALNVDMDMTPFLRINPCGYAGLKMVQMRDLLPSPPAFDEVSQRLEQALRARLGYA.

The BPL/LPL catalytic domain occupies 30-205 (ERTADEIWLL…QALRARLGYA (176 aa)). Substrate contacts are provided by residues 69-76 (RGGQVTYH), 136-138 (SLG), and 149-151 (GLA). Cys167 acts as the Acyl-thioester intermediate in catalysis.

It belongs to the LipB family.

The protein localises to the cytoplasm. The catalysed reaction is octanoyl-[ACP] + L-lysyl-[protein] = N(6)-octanoyl-L-lysyl-[protein] + holo-[ACP] + H(+). Its pathway is protein modification; protein lipoylation via endogenous pathway; protein N(6)-(lipoyl)lysine from octanoyl-[acyl-carrier-protein]: step 1/2. Functionally, catalyzes the transfer of endogenously produced octanoic acid from octanoyl-acyl-carrier-protein onto the lipoyl domains of lipoate-dependent enzymes. Lipoyl-ACP can also act as a substrate although octanoyl-ACP is likely to be the physiological substrate. This chain is Octanoyltransferase, found in Ectopseudomonas mendocina (strain ymp) (Pseudomonas mendocina).